The sequence spans 184 residues: MVVVAVSGQPGSGKTTIAREVARVLKVPLVSSGTIFRELAAKMGMDLVEFHRYAETNPEIDKMIDALTAEKAKAGDVVVEGHLAAWVARPYADVCIYLKASSEVRAKRVSIRDKKSFEEALREVREREELNRKRYLSLYGIDIHNLTIFDLVLDTSYLSINDAVRISLDYICTTLEIKYSKKIC.

Residue 8–16 (GQPGSGKTT) coordinates ATP.

It belongs to the cytidylate kinase family. Type 2 subfamily.

It localises to the cytoplasm. The catalysed reaction is CMP + ATP = CDP + ADP. It catalyses the reaction dCMP + ATP = dCDP + ADP. The polypeptide is Cytidylate kinase (Pyrobaculum neutrophilum (strain DSM 2338 / JCM 9278 / NBRC 100436 / V24Sta) (Thermoproteus neutrophilus)).